We begin with the raw amino-acid sequence, 92 residues long: Probable Fe(2+)-trafficking protein (92 aa).

This sequence belongs to the Fe(2+)-trafficking protein family.

In terms of biological role, could be a mediator in iron transactions between iron acquisition and iron-requiring processes, such as synthesis and/or repair of Fe-S clusters in biosynthetic enzymes. This Shewanella oneidensis (strain ATCC 700550 / JCM 31522 / CIP 106686 / LMG 19005 / NCIMB 14063 / MR-1) protein is Probable Fe(2+)-trafficking protein.